We begin with the raw amino-acid sequence, 333 residues long: Tetraacyldisaccharide 4'-kinase (333 aa).

60-67 (TVGGTGKT) is an ATP binding site.

It belongs to the LpxK family.

The enzyme catalyses a lipid A disaccharide + ATP = a lipid IVA + ADP + H(+). It functions in the pathway glycolipid biosynthesis; lipid IV(A) biosynthesis; lipid IV(A) from (3R)-3-hydroxytetradecanoyl-[acyl-carrier-protein] and UDP-N-acetyl-alpha-D-glucosamine: step 6/6. Functionally, transfers the gamma-phosphate of ATP to the 4'-position of a tetraacyldisaccharide 1-phosphate intermediate (termed DS-1-P) to form tetraacyldisaccharide 1,4'-bis-phosphate (lipid IVA). This is Tetraacyldisaccharide 4'-kinase from Azotobacter vinelandii (strain DJ / ATCC BAA-1303).